The primary structure comprises 268 residues: Interleukin-1 beta (268 aa).

A propeptide spanning residues 1–116 (MATVPELTSE…TWDDYSLECD (116 aa)) is cleaved from the precursor.

The protein belongs to the IL-1 family. As to quaternary structure, monomer. In its precursor form, weakly interacts with full-length MEFV; the mature cytokine does not interact at all. Interacts with integrins ITGAV:ITGBV and ITGA5:ITGB1; integrin-binding is required for IL1B signaling. Interacts with cargo receptor TMED10; the interaction is direct and is required for the secretion of IL1B mature form. Interacts with HSP90AB1; the interaction facilitates cargo translocation into the ERGIC. Interacts with HSP90B1; the interaction facilitates cargo translocation into the ERGIC.

Its subcellular location is the cytoplasm. The protein resides in the cytosol. It localises to the secreted. The protein localises to the lysosome. It is found in the extracellular exosome. In terms of biological role, potent pro-inflammatory cytokine. Initially discovered as the major endogenous pyrogen, induces prostaglandin synthesis, neutrophil influx and activation, T-cell activation and cytokine production, B-cell activation and antibody production, and fibroblast proliferation and collagen production. Promotes Th17 differentiation of T-cells. Synergizes with IL12/interleukin-12 to induce IFNG synthesis from T-helper 1 (Th1) cells. Plays a role in angiogenesis by inducing VEGF production synergistically with TNF and IL6. Involved in transduction of inflammation downstream of pyroptosis: its mature form is specifically released in the extracellular milieu by passing through the gasdermin-D (GSDMD) pore. The chain is Interleukin-1 beta (IL1B) from Oryctolagus cuniculus (Rabbit).